Here is a 441-residue protein sequence, read N- to C-terminus: ATP-dependent protease ATPase subunit HslU (441 aa).

ATP-binding positions include V18, 60–65, D253, E319, and R391; that span reads GVGKTE.

The protein belongs to the ClpX chaperone family. HslU subfamily. A double ring-shaped homohexamer of HslV is capped on each side by a ring-shaped HslU homohexamer. The assembly of the HslU/HslV complex is dependent on binding of ATP.

The protein localises to the cytoplasm. Its function is as follows. ATPase subunit of a proteasome-like degradation complex; this subunit has chaperone activity. The binding of ATP and its subsequent hydrolysis by HslU are essential for unfolding of protein substrates subsequently hydrolyzed by HslV. HslU recognizes the N-terminal part of its protein substrates and unfolds these before they are guided to HslV for hydrolysis. This Nitratidesulfovibrio vulgaris (strain DP4) (Desulfovibrio vulgaris) protein is ATP-dependent protease ATPase subunit HslU.